The following is a 468-amino-acid chain: Meiotically up-regulated gene 111 protein (468 aa).

The next 12 membrane-spanning stretches (helical) occupy residues 13-33 (LVLIYLWYLVDCTSFSMNSVT), 59-79 (IVSASSCLLQYLVALVVVPFY), 92-112 (VFTTWVGEEYFFFASTLSILY), 116-136 (FPTCAYFVIFSISFLLGISGT), 158-178 (IVVLNSIFVVSSCIGPFLGSI), 190-210 (LISWTIHFINFVFHSLLAVFF), 285-305 (PIPIVLLCFFLYSLLTPFFDI), 330-350 (FGSLLTCSVCLFLTYVGGFSV), 356-376 (TMLIGLTATTLIIFILYFATA), 382-402 (LALFYGITSSIGPSIHGLVAA), 417-437 (ALLEASATFISYPFQSLAFIV), and 446-466 (FFIGPICICLLGSISSYLLLG).

The protein resides in the membrane. In terms of biological role, has a role in meiosis. The protein is Meiotically up-regulated gene 111 protein (mug111) of Schizosaccharomyces pombe (strain 972 / ATCC 24843) (Fission yeast).